The sequence spans 218 residues: Hypoxanthine-guanine phosphoribosyltransferase (218 aa).

GMP-binding positions include lysine 69, 134–142 (EDIIDTGKT), lysine 166, 186–188 (KFV), and aspartate 194. Catalysis depends on aspartate 138, which acts as the Proton acceptor. Position 194 (aspartate 194) interacts with Mg(2+).

The protein belongs to the purine/pyrimidine phosphoribosyltransferase family. As to quaternary structure, homotetramer. It depends on Mg(2+) as a cofactor.

It localises to the cytoplasm. The enzyme catalyses IMP + diphosphate = hypoxanthine + 5-phospho-alpha-D-ribose 1-diphosphate. The catalysed reaction is GMP + diphosphate = guanine + 5-phospho-alpha-D-ribose 1-diphosphate. The protein operates within purine metabolism; IMP biosynthesis via salvage pathway; IMP from hypoxanthine: step 1/1. Converts guanine to guanosine monophosphate, and hypoxanthine to inosine monophosphate. Transfers the 5-phosphoribosyl group from 5-phosphoribosylpyrophosphate onto the purine. Plays a central role in the generation of purine nucleotides through the purine salvage pathway. The protein is Hypoxanthine-guanine phosphoribosyltransferase (HPRT1) of Gallus gallus (Chicken).